Consider the following 189-residue polypeptide: Transcription factor FapR (189 aa).

The protein belongs to the FapR family.

Functionally, transcriptional factor involved in regulation of membrane lipid biosynthesis by repressing genes involved in fatty acid and phospholipid metabolism. The protein is Transcription factor FapR of Listeria monocytogenes serotype 4b (strain CLIP80459).